The sequence spans 276 residues: Diaminopimelate epimerase (276 aa).

Positions 13, 46, and 66 each coordinate substrate. Catalysis depends on C75, which acts as the Proton donor. Residues 76-77, N159, N192, and 210-211 contribute to the substrate site; these read GN and ER. Residue C219 is the Proton acceptor of the active site. 220–221 contributes to the substrate binding site; sequence GT.

Belongs to the diaminopimelate epimerase family. Homodimer.

The protein resides in the cytoplasm. It catalyses the reaction (2S,6S)-2,6-diaminopimelate = meso-2,6-diaminopimelate. Its pathway is amino-acid biosynthesis; L-lysine biosynthesis via DAP pathway; DL-2,6-diaminopimelate from LL-2,6-diaminopimelate: step 1/1. Catalyzes the stereoinversion of LL-2,6-diaminopimelate (L,L-DAP) to meso-diaminopimelate (meso-DAP), a precursor of L-lysine and an essential component of the bacterial peptidoglycan. In Aeromonas salmonicida (strain A449), this protein is Diaminopimelate epimerase.